The sequence spans 567 residues: MATNAAAPPCPCYDTPEGVDILGRYDPEFAAILTRDSLAFVAGLQREFRGAVRYAMERRREAQRRYDAGELPRFDPATRPVREAGGWACAPVPPAIADRTVEITGPAEPRKMVINALNSGAKVFMADFEDALSPTWENLMRGQVNLRDAVAGTITYRDAARGREYRLGDRPATLFVRPRGWHLPEAHVLVDGEPAIGCLVDFGLYFFHSHAAFRSGQGADFGPFFYLPKMEHSREARIWKGVFERAEKEAGIGRGSIRATVLVETLPAVFQMEEILHELRDHSAGLNCGRWDYIFSYVKTFRARPDRLLPDRALVGMAQHFMRSYSHLLIQTCHRRGVHAMGGMAAQIPIKDDAAANEAALELVRKDKLREVRAGHDGTWAAHPGLIPAIREVFEGHLGGRPNQIDAAAGDAARAGVAVTEEDLLQPPRGARTVEGLRHNTRVGVQYVAAWLSGSGSVPLYNLMEDAATAEISRVQNWQWLRHGAVLDAGGVEVRATPELLARVVEVEMARVEAEVGAERFRRGRYAEAGRIFSRQCTAPELDDFLTLDAYNLIVVHHPGASSPCKL.

R177 (proton acceptor) is an active-site residue. D466 (proton donor) is an active-site residue. The Microbody targeting signal motif lies at 565–567 (CKL).

The protein belongs to the malate synthase family.

It is found in the glyoxysome. It carries out the reaction glyoxylate + acetyl-CoA + H2O = (S)-malate + CoA + H(+). It functions in the pathway carbohydrate metabolism; glyoxylate cycle; (S)-malate from isocitrate: step 2/2. This chain is Malate synthase, found in Oryza sativa subsp. japonica (Rice).